The following is a 727-amino-acid chain: 1,4-alpha-glucan branching enzyme GlgB (727 aa).

The Nucleophile role is filled by aspartate 405. Catalysis depends on glutamate 458, which acts as the Proton donor.

Belongs to the glycosyl hydrolase 13 family. GlgB subfamily. As to quaternary structure, monomer.

It carries out the reaction Transfers a segment of a (1-&gt;4)-alpha-D-glucan chain to a primary hydroxy group in a similar glucan chain.. It functions in the pathway glycan biosynthesis; glycogen biosynthesis. Its function is as follows. Catalyzes the formation of the alpha-1,6-glucosidic linkages in glycogen by scission of a 1,4-alpha-linked oligosaccharide from growing alpha-1,4-glucan chains and the subsequent attachment of the oligosaccharide to the alpha-1,6 position. This is 1,4-alpha-glucan branching enzyme GlgB from Yersinia pseudotuberculosis serotype I (strain IP32953).